The primary structure comprises 481 residues: Arginine biosynthesis bifunctional protein ArgJ, chloroplastic (481 aa).

Residues threonine 225, lysine 251, threonine 262, glutamate 349, asparagine 476, and threonine 481 each contribute to the substrate site. Threonine 262 (nucleophile) is an active-site residue.

It belongs to the ArgJ family. Heterodimer of an alpha and a beta chain.

The protein resides in the plastid. It localises to the chloroplast. The catalysed reaction is N(2)-acetyl-L-ornithine + L-glutamate = N-acetyl-L-glutamate + L-ornithine. It catalyses the reaction L-glutamate + acetyl-CoA = N-acetyl-L-glutamate + CoA + H(+). The protein operates within amino-acid biosynthesis; L-arginine biosynthesis; L-ornithine and N-acetyl-L-glutamate from L-glutamate and N(2)-acetyl-L-ornithine (cyclic): step 1/1. It participates in amino-acid biosynthesis; L-arginine biosynthesis; N(2)-acetyl-L-ornithine from L-glutamate: step 1/4. Catalyzes two activities which are involved in the cyclic version of arginine biosynthesis: the synthesis of acetylglutamate from glutamate and acetyl-CoA, and of ornithine by transacetylation between acetylornithine and glutamate. The polypeptide is Arginine biosynthesis bifunctional protein ArgJ, chloroplastic (Populus trichocarpa (Western balsam poplar)).